The chain runs to 289 residues: ATP synthase gamma chain (289 aa).

The protein belongs to the ATPase gamma chain family. As to quaternary structure, F-type ATPases have 2 components, CF(1) - the catalytic core - and CF(0) - the membrane proton channel. CF(1) has five subunits: alpha(3), beta(3), gamma(1), delta(1), epsilon(1). CF(0) has three main subunits: a, b and c.

The protein localises to the cell inner membrane. In terms of biological role, produces ATP from ADP in the presence of a proton gradient across the membrane. The gamma chain is believed to be important in regulating ATPase activity and the flow of protons through the CF(0) complex. The protein is ATP synthase gamma chain of Polynucleobacter necessarius subsp. necessarius (strain STIR1).